The primary structure comprises 237 residues: tRNA (guanine-N(7)-)-methyltransferase (237 aa).

Positions 68, 93, 120, and 143 each coordinate S-adenosyl-L-methionine. The active site involves Asp143. Residues Lys147, Asp179, and 216 to 219 (TKFE) contribute to the substrate site.

The protein belongs to the class I-like SAM-binding methyltransferase superfamily. TrmB family.

The enzyme catalyses guanosine(46) in tRNA + S-adenosyl-L-methionine = N(7)-methylguanosine(46) in tRNA + S-adenosyl-L-homocysteine. It participates in tRNA modification; N(7)-methylguanine-tRNA biosynthesis. In terms of biological role, catalyzes the formation of N(7)-methylguanine at position 46 (m7G46) in tRNA. The polypeptide is tRNA (guanine-N(7)-)-methyltransferase (Shewanella halifaxensis (strain HAW-EB4)).